The following is a 349-amino-acid chain: Ureidoglycolate dehydrogenase (NAD(+)) (349 aa).

His116 functions as the Proton acceptor in the catalytic mechanism. Residues Ser140, Asp174 to Ala176, Lys224, and Gly306 to Asp308 each bind NAD(+).

Belongs to the LDH2/MDH2 oxidoreductase family. As to quaternary structure, homodimer.

It is found in the cytoplasm. The catalysed reaction is (S)-ureidoglycolate + NAD(+) = N-carbamoyl-2-oxoglycine + NADH + H(+). It participates in nitrogen metabolism; (S)-allantoin degradation; oxalurate from (S)-ureidoglycolate: step 1/1. Functionally, allD plays a pivotal role as a metabolic branch-point enzyme in nitrogen utilization via the assimilation of allantoin. It is able to utilize allantoin as a sole source of nitrogen under anaerobic conditions. Catalyzes the oxidation of ureidoglycolate to oxalurate. The sequence is that of Ureidoglycolate dehydrogenase (NAD(+)) from Escherichia coli (strain K12).